Consider the following 178-residue polypeptide: UPF0302 protein BCAH187_A1683 (178 aa).

It belongs to the UPF0302 family.

This is UPF0302 protein BCAH187_A1683 from Bacillus cereus (strain AH187).